The sequence spans 195 residues: Imidazoleglycerol-phosphate dehydratase (195 aa).

Belongs to the imidazoleglycerol-phosphate dehydratase family.

It is found in the cytoplasm. The enzyme catalyses D-erythro-1-(imidazol-4-yl)glycerol 3-phosphate = 3-(imidazol-4-yl)-2-oxopropyl phosphate + H2O. It participates in amino-acid biosynthesis; L-histidine biosynthesis; L-histidine from 5-phospho-alpha-D-ribose 1-diphosphate: step 6/9. This Paraburkholderia xenovorans (strain LB400) protein is Imidazoleglycerol-phosphate dehydratase.